Reading from the N-terminus, the 237-residue chain is DNA repair protein RecO (237 aa).

It belongs to the RecO family.

In terms of biological role, involved in DNA repair and RecF pathway recombination. This is DNA repair protein RecO from Rickettsia felis (strain ATCC VR-1525 / URRWXCal2) (Rickettsia azadi).